The following is a 189-amino-acid chain: Thymidine kinase (189 aa).

ATP contacts are provided by residues 9-16 (GTMNSGKT) and 85-88 (DESQ). E86 (proton acceptor) is an active-site residue. Residues C143, C146, C180, and H183 each coordinate Zn(2+).

This sequence belongs to the thymidine kinase family. In terms of assembly, homotetramer.

It is found in the cytoplasm. The catalysed reaction is thymidine + ATP = dTMP + ADP + H(+). In Streptococcus pyogenes serotype M18 (strain MGAS8232), this protein is Thymidine kinase.